The primary structure comprises 115 residues: U3-lycotoxin-Ls1g (115 aa).

Residues 1-20 (MKFVLLFGVFLVTLFSYSSA) form the signal peptide. The propeptide occupies 21–44 (EMLDDFDQADEDELLSLIEKEEAR). 4 disulfide bridges follow: Cys-48/Cys-63, Cys-55/Cys-72, Cys-62/Cys-87, and Cys-74/Cys-85.

Belongs to the neurotoxin 19 (CSTX) family. 01 subfamily. Expressed by the venom gland.

Its subcellular location is the secreted. This Lycosa singoriensis (Wolf spider) protein is U3-lycotoxin-Ls1g.